The following is a 124-amino-acid chain: Ubiquitin-related modifier 1 (124 aa).

The tract at residues 34–53 (IPSLVPKDNTTSAKNPPPKD) is disordered. At glycine 124 the chain carries 1-thioglycine. Residue glycine 124 forms a Glycyl lysine isopeptide (Gly-Lys) (interchain with K-? in acceptor proteins) linkage.

The protein belongs to the URM1 family. C-terminal thiocarboxylation occurs in 2 steps, it is first acyl-adenylated (-COAMP) via the hesA/moeB/thiF part of UBA4, then thiocarboxylated (-COSH) via the rhodanese domain of UBA4.

Its subcellular location is the cytoplasm. The protein operates within tRNA modification; 5-methoxycarbonylmethyl-2-thiouridine-tRNA biosynthesis. In terms of biological role, acts as a sulfur carrier required for 2-thiolation of mcm(5)S(2)U at tRNA wobble positions of cytosolic tRNA(Lys), tRNA(Glu) and tRNA(Gln). Serves as sulfur donor in tRNA 2-thiolation reaction by being thiocarboxylated (-COSH) at its C-terminus by the MOCS3 homolog UBA4. The sulfur is then transferred to tRNA to form 2-thiolation of mcm(5)S(2)U. Prior mcm(5) tRNA modification by the elongator complex is required for 2-thiolation. Also acts as a ubiquitin-like protein (UBL) that is covalently conjugated via an isopeptide bond to lysine residues of target proteins such as AHP1. The thiocarboxylated form serves as substrate for conjugation and oxidative stress specifically induces the formation of UBL-protein conjugates. This is Ubiquitin-related modifier 1 from Coprinopsis cinerea (strain Okayama-7 / 130 / ATCC MYA-4618 / FGSC 9003) (Inky cap fungus).